Consider the following 356-residue polypeptide: 5-formaminoimidazole-4-carboxamide-1-(beta)-D-ribofuranosyl 5'-monophosphate synthetase (356 aa).

The 5-amino-1-(5-phospho-beta-D-ribosyl)imidazole-4-carboxamide site is built by H27 and S94. Positions 101–333 (TENFAELTVP…YADLIQEDLS (233 aa)) constitute an ATP-grasp domain. ATP is bound by residues 145 to 196 (PRDI…TRYY) and E226. A 5-amino-1-(5-phospho-beta-D-ribosyl)imidazole-4-carboxamide-binding site is contributed by N255. Mg(2+) is bound by residues E293 and E306.

This sequence belongs to the phosphohexose mutase family. Mg(2+) serves as cofactor. It depends on Mn(2+) as a cofactor.

The enzyme catalyses 5-amino-1-(5-phospho-beta-D-ribosyl)imidazole-4-carboxamide + formate + ATP = 5-formamido-1-(5-phospho-D-ribosyl)imidazole-4-carboxamide + ADP + phosphate. It functions in the pathway purine metabolism; IMP biosynthesis via de novo pathway; 5-formamido-1-(5-phospho-D-ribosyl)imidazole-4-carboxamide from 5-amino-1-(5-phospho-D-ribosyl)imidazole-4-carboxamide (formate route): step 1/1. In terms of biological role, catalyzes the ATP- and formate-dependent formylation of 5-aminoimidazole-4-carboxamide-1-beta-d-ribofuranosyl 5'-monophosphate (AICAR) to 5-formaminoimidazole-4-carboxamide-1-beta-d-ribofuranosyl 5'-monophosphate (FAICAR) in the absence of folates. In Methanosarcina acetivorans (strain ATCC 35395 / DSM 2834 / JCM 12185 / C2A), this protein is 5-formaminoimidazole-4-carboxamide-1-(beta)-D-ribofuranosyl 5'-monophosphate synthetase.